The sequence spans 568 residues: Proline--tRNA ligase (568 aa).

The protein belongs to the class-II aminoacyl-tRNA synthetase family. ProS type 1 subfamily. Homodimer.

It localises to the cytoplasm. The catalysed reaction is tRNA(Pro) + L-proline + ATP = L-prolyl-tRNA(Pro) + AMP + diphosphate. Functionally, catalyzes the attachment of proline to tRNA(Pro) in a two-step reaction: proline is first activated by ATP to form Pro-AMP and then transferred to the acceptor end of tRNA(Pro). As ProRS can inadvertently accommodate and process non-cognate amino acids such as alanine and cysteine, to avoid such errors it has two additional distinct editing activities against alanine. One activity is designated as 'pretransfer' editing and involves the tRNA(Pro)-independent hydrolysis of activated Ala-AMP. The other activity is designated 'posttransfer' editing and involves deacylation of mischarged Ala-tRNA(Pro). The misacylated Cys-tRNA(Pro) is not edited by ProRS. In Aliarcobacter butzleri (strain RM4018) (Arcobacter butzleri), this protein is Proline--tRNA ligase.